Reading from the N-terminus, the 556-residue chain is Glucomannan 4-beta-mannosyltransferase 7 (556 aa).

The chain crosses the membrane as a helical span at residues 58-78; the sequence is VVVPVFKFLVLLCLVMSVMFF. Asp158 is a catalytic residue. The substrate site is built by Asp217 and Asp219. Asp311 is a catalytic residue. The next 4 helical transmembrane spans lie at 390 to 410, 426 to 448, 502 to 522, and 526 to 546; these read IVAH…TVLF, LITL…WVLF, LLEL…IVYG, and LYVY…GFVG.

It belongs to the glycosyltransferase 2 family. Plant cellulose synthase-like A subfamily. Ubiquitous.

It is found in the golgi apparatus membrane. The catalysed reaction is GDP-mannose + (glucomannan)n = GDP + (glucomannan)n+1.. Its function is as follows. Probable mannan synthase which consists of a 4-beta-mannosyltransferase activity on mannan using GDP-mannose. The beta-1,4-mannan product is the backbone for galactomannan synthesis by galactomannan galactosyltransferase. Galactomannan is a noncellulosic polysaccharides of plant cell wall. Required for synthesis of a cell wall polysaccharide essential for pollen tube growth, for cell wall structure, or for signaling during plant embryo development. This is Glucomannan 4-beta-mannosyltransferase 7 from Arabidopsis thaliana (Mouse-ear cress).